The following is a 292-amino-acid chain: Short chain dehydrogenase mpl6 (292 aa).

NADP(+)-binding residues include V37, D95, N122, R156, Y188, K192, V221, and T223. Y188 (proton donor) is an active-site residue. The active-site Lowers pKa of active site Tyr is K192.

This sequence belongs to the short-chain dehydrogenases/reductases (SDR) family.

It functions in the pathway mycotoxin biosynthesis. In terms of biological role, short chain dehydrogenase; part of the gene cluster that mediates the biosynthesis of the mycotoxin citrinin, a hepato-nephrotoxic compound to humans due to inhibition of respiration complex III. The pathway begins with the synthesis of a keto-aldehyde intermediate by the citrinin PKS (pksCT) from successive condensations of 4 malonyl-CoA units, presumably with a simple acetyl-CoA starter unit. Release of the keto-aldehyde intermediate is consistent with the presence of the C-terminal reductive release domain. Mp11 collaborates with pksCT by catalyzing the hydrolysis of ACP-bound acyl intermediates to free the ACP from stalled intermediates. Mpl2 then catalyzes the oxidation of the C-12 methyl of the ketone intermediate to an alcohol intermediate which is further oxidized by the oxidoreductase mpl7 to produce a bisaldehyde intermediate. The fourth catalytic step is catalyzed by the mpl4 aldehyde dehydrogenase. The final transformation is the reduction of C-3 by mpl6 to provide the chemically stable citrinin nucleus. The chain is Short chain dehydrogenase mpl6 from Monascus purpureus (Red mold).